The primary structure comprises 352 residues: Lipopolysaccharide core biosynthesis mannosyltransferase LpcC (352 aa).

Belongs to the glycosyltransferase group 1 family. Glycosyltransferase 4 subfamily.

It participates in bacterial outer membrane biogenesis; LPS core biosynthesis. Its function is as follows. Acts at transfer of mannose group to a 3-deoxy-D-mono octulonic acid (KDO) via an alpha-1,5 linkage. The sequence is that of Lipopolysaccharide core biosynthesis mannosyltransferase LpcC (lpcC) from Rhizobium leguminosarum bv. viciae.